A 168-amino-acid polypeptide reads, in one-letter code: SPbeta prophage-derived uncharacterized protein YonX (168 aa).

A coiled-coil region spans residues 1 to 53 (MNAQLFNLESRLDELENEINTQYCELDTNLDALKSNRIELESQLEKFESSLTN).

This is SPbeta prophage-derived uncharacterized protein YonX (yonX) from Bacillus subtilis (strain 168).